The chain runs to 280 residues: MSPAPVQVMGVLNVTDDSFSDGGCYLDLDDAVKHGLAMAAAGAGIVDVGGESSRPGATRVDPAVETSRVIPVVKELAAQGITVSIDTMRADVARAALQNGAQMVNDVSGGRADPAMGPLLAEADVPWVLMHWRAVSADTPHVPVRYGNVVAEVRADLLASVADAVAAGVDPARLVLDPGLGFAKTAQHNWAILHALPELVATGIPVLVGASRKRFLGALLAGPDGVMRPTDGRDTATAVISALAALHGAWGVRVHDVRASVDAIKVVEAWMGAERIERDG.

Residues 1 to 265 enclose the Pterin-binding domain; the sequence is MSPAPVQVMG…DVRASVDAIK (265 aa). Residue asparagine 13 participates in Mg(2+) binding. Residues aspartate 86, asparagine 105, aspartate 177, lysine 213, and 253 to 255 contribute to the (7,8-dihydropterin-6-yl)methyl diphosphate site; that span reads RVH.

Belongs to the DHPS family. Homodimer. The cofactor is Mg(2+).

It carries out the reaction (7,8-dihydropterin-6-yl)methyl diphosphate + 4-aminobenzoate = 7,8-dihydropteroate + diphosphate. Its pathway is cofactor biosynthesis; tetrahydrofolate biosynthesis; 7,8-dihydrofolate from 2-amino-4-hydroxy-6-hydroxymethyl-7,8-dihydropteridine diphosphate and 4-aminobenzoate: step 1/2. Catalyzes the condensation of para-aminobenzoate (pABA) with 6-hydroxymethyl-7,8-dihydropterin diphosphate (DHPt-PP) to form 7,8-dihydropteroate (H2Pte), the immediate precursor of folate derivatives. The sequence is that of Dihydropteroate synthase (folP1) from Mycobacterium bovis (strain ATCC BAA-935 / AF2122/97).